Here is a 48-residue protein sequence, read N- to C-terminus: ATP synthase protein 8 (48 aa).

The helical transmembrane segment at 13–33 (LTYGFLLLIILLVLFSQFLLP) threads the bilayer.

This sequence belongs to the ATPase protein 8 family. F-type ATPases have 2 components, CF(1) - the catalytic core - and CF(0) - the membrane proton channel.

The protein resides in the mitochondrion membrane. Functionally, mitochondrial membrane ATP synthase (F(1)F(0) ATP synthase or Complex V) produces ATP from ADP in the presence of a proton gradient across the membrane which is generated by electron transport complexes of the respiratory chain. F-type ATPases consist of two structural domains, F(1) - containing the extramembraneous catalytic core and F(0) - containing the membrane proton channel, linked together by a central stalk and a peripheral stalk. During catalysis, ATP synthesis in the catalytic domain of F(1) is coupled via a rotary mechanism of the central stalk subunits to proton translocation. Part of the complex F(0) domain. Minor subunit located with subunit a in the membrane. This is ATP synthase protein 8 (ATP8) from Wickerhamomyces canadensis (Yeast).